Reading from the N-terminus, the 489-residue chain is Occludin (489 aa).

At 1-51 the chain is on the cytoplasmic side; sequence MMYEKRSYTGYGHPSSHYDYPPPSGPPGSFYLADVPPQHFYQWRSPPGIVR. The MARVEL domain occupies 45-248; sequence SPPGIVRILQ…ICYFAQKTRH (204 aa). The chain crosses the membrane as a helical span at residues 52–74; sequence ILQGSVVILCLVIFACVASTLAW. The Extracellular portion of the chain corresponds to 75–112; the sequence is EYYGSGGLLGYGGGLGSYYNGYYGGYNGYYYGGLTNPR. The chain crosses the membrane as a helical span at residues 113-137; that stretch reads AANGFMIAMAVLCFLVTLGLVIAGL. Over 138–147 the chain is Cytoplasmic; sequence SKASGARSRR. A helical membrane pass occupies residues 148 to 172; that stretch reads FYLLVAVLSGLLAFVMLIASIVYVV. Residues 173–222 are Extracellular-facing; the sequence is GVNPRAGLGASSGSLYYNQMLMLCNQMMSPVAGGIMNQYLYHYCMVDPQE. A disulfide bridge links Cys-196 with Cys-216. The helical transmembrane segment at 223–244 threads the bilayer; sequence AVAIVCGFLTVILLCVICYFAQ. Over 245–489 the chain is Cytoplasmic; that stretch reads KTRHKIWKYG…MVGGYDQSRS (245 aa). Ser-280 carries the phosphoserine modification. At Thr-285 the chain carries Phosphothreonine. Position 300 is a phosphoserine (Ser-300). The segment at 308–382 is disordered; sequence PAQENGYGHS…ESSGEQNRDD (75 aa). Residues 322–332 show a composition bias toward pro residues; it reads PSVPPPEGPSP. The segment covering 345–354 has biased composition (basic residues); that stretch reads PARRGHRQRP. Phosphotyrosine is present on residues Tyr-364 and Tyr-368. A compositionally biased stretch (polar residues) spans 365-377; the sequence is ETDYTTAAESSGE. Phosphothreonine; by PKC/PRKCH occurs at positions 369 and 370. A Phosphoserine modification is found at Ser-374. The region spanning 381–489 is the OCEL domain; it reads DDWASLYPPI…MVGGYDQSRS (109 aa). The stretch at 407–434 forms a coiled coil; sequence LQRYKALCAEMDDIGTQLRQLSHELDCL. Ser-457 bears the Phosphoserine mark.

The protein belongs to the ELL/occludin family. In terms of assembly, interacts with TJP1/ZO1. Interacts with VAPA. Interacts with CLDN1, CLDN6, CLDN9, CLDN11, CLDN12 and CLDN17. Interacts with PLSCR1. Interacts with LSR, ILDR1 and ILDR2. Interacts with TJP2/ZO2. In terms of processing, dephosphorylated by PTPRJ. As to expression, localized at tight junctions of both epithelial and endothelial cells.

The protein resides in the cell membrane. It localises to the cell junction. It is found in the tight junction. Functionally, may play a role in the formation and regulation of the tight junction (TJ) paracellular permeability barrier. This Potorous tridactylus (Potoroo) protein is Occludin (OCLN).